The chain runs to 866 residues: Ribosome biogenesis protein BOP1 homolog (866 aa).

2 disordered regions span residues 1–180 and 214–241; these read MVAN…EETR and PPEA…EEDI. 3 stretches are compositionally biased toward acidic residues: residues 37 to 52, 60 to 146, and 167 to 179; these read VDDE…DEEN, GNDE…LEEP, and TAED…DEET. WD repeat units lie at residues 527-566, 568-608, 697-735, 738-777, 781-820, and 836-866; these read GHTD…CIRT, PTGD…SLLV, KSKG…LLKK, PSCK…RPYQ, LHHS…DLLQ, and VNDF…RLYT.

It belongs to the WD repeat BOP1/ERB1 family.

It localises to the nucleus. It is found in the nucleolus. Its subcellular location is the nucleoplasm. In terms of biological role, required for maturation of ribosomal RNAs and formation of the large ribosomal subunit. This chain is Ribosome biogenesis protein BOP1 homolog, found in Aedes aegypti (Yellowfever mosquito).